Consider the following 486-residue polypeptide: Aspartyl/glutamyl-tRNA(Asn/Gln) amidotransferase subunit B (486 aa).

The protein belongs to the GatB/GatE family. GatB subfamily. In terms of assembly, heterotrimer of A, B and C subunits.

It carries out the reaction L-glutamyl-tRNA(Gln) + L-glutamine + ATP + H2O = L-glutaminyl-tRNA(Gln) + L-glutamate + ADP + phosphate + H(+). It catalyses the reaction L-aspartyl-tRNA(Asn) + L-glutamine + ATP + H2O = L-asparaginyl-tRNA(Asn) + L-glutamate + ADP + phosphate + 2 H(+). Allows the formation of correctly charged Asn-tRNA(Asn) or Gln-tRNA(Gln) through the transamidation of misacylated Asp-tRNA(Asn) or Glu-tRNA(Gln) in organisms which lack either or both of asparaginyl-tRNA or glutaminyl-tRNA synthetases. The reaction takes place in the presence of glutamine and ATP through an activated phospho-Asp-tRNA(Asn) or phospho-Glu-tRNA(Gln). The polypeptide is Aspartyl/glutamyl-tRNA(Asn/Gln) amidotransferase subunit B (Orientia tsutsugamushi (strain Boryong) (Rickettsia tsutsugamushi)).